Here is a 224-residue protein sequence, read N- to C-terminus: CRP-like cAMP-activated global transcriptional regulator (224 aa).

3',5'-cyclic AMP is bound by residues 64 to 70, 79 to 82, 89 to 90, 134 to 135, 142 to 143, and 178 to 188; these read GRENLLT, GELS, RT, TN, IF, and EEIAQLVGASR. The HTH crp-type domain maps to 144-217; sequence TDVPGRVAKQ…GKSVLISDSE (74 aa). The H-T-H motif DNA-binding region spans 177-196; that stretch reads QEEIAQLVGASRETVNKALA.

As to quaternary structure, homodimer.

Functionally, global transcriptional regulator that complexes with cAMP and binds to specific DNA promoter sites, causing DNA-bending, to regulate transcription. cAMP improves binding to specific DNA sequences, probably by altering protein conformation. Activates expression of whiB1. This is CRP-like cAMP-activated global transcriptional regulator from Mycobacterium tuberculosis (strain CDC 1551 / Oshkosh).